A 544-amino-acid chain; its full sequence is (E,E)-germacrene B synthase (544 aa).

The Mg(2+) site is built by Asp-296, Asp-300, and Glu-449. A DDXXD motif motif is present at residues 296-300; it reads DDTFD.

It belongs to the terpene synthase family. Requires Mg(2+) as cofactor. Mn(2+) serves as cofactor.

The protein resides in the cytoplasm. It catalyses the reaction (2E,6E)-farnesyl diphosphate = (1E,4E)-germacrene B + diphosphate. It participates in secondary metabolite biosynthesis; terpenoid biosynthesis. Involved in the biosynthesis of germacrene B. This Solanum habrochaites (Wild tomato) protein is (E,E)-germacrene B synthase (SSTLH1).